A 204-amino-acid chain; its full sequence is Cytochrome bo(3) ubiquinol oxidase subunit 3 (204 aa).

Topologically, residues 1–31 are cytoplasmic; it reads MATDTLTHATAHAHEHGHHDAGGTKIFGFWI. Residues 32–50 form a helical membrane-spanning segment; that stretch reads YLMSDCILFSILFATYAVL. Topologically, residues 51-66 are periplasmic; that stretch reads VNGTAGGPTGKDIFEL. Residues 67–85 form a helical membrane-spanning segment; it reads PFVLVETFLLLFSSITYGM. The Cytoplasmic segment spans residues 86–101; it reads AAIAMYKNNKSQVISW. Residues 102 to 120 form a helical membrane-spanning segment; that stretch reads LALTWLFGAGFIGMEIYEF. The Periplasmic portion of the chain corresponds to 121–142; that stretch reads HHLIVNGMGPDRSGFLSAFFAL. The chain crosses the membrane as a helical span at residues 143-161; it reads VGTHGLHVTSGLIWMAVLM. Over 162-184 the chain is Cytoplasmic; sequence VQIARRGLTSTNRTRIMCLSLFW. Residues 185-203 traverse the membrane as a helical segment; that stretch reads HFLDVVWICVFTVVYLMGA. Methionine 204 is a topological domain (periplasmic).

This sequence belongs to the cytochrome c oxidase subunit 3 family. Heterooctamer of two A chains, two B chains, two C chains and two D chains.

The protein localises to the cell inner membrane. Its function is as follows. Cytochrome bo(3) ubiquinol terminal oxidase is the component of the aerobic respiratory chain of E.coli that predominates when cells are grown at high aeration. Has proton pump activity across the membrane in addition to electron transfer, pumping 2 protons/electron. The chain is Cytochrome bo(3) ubiquinol oxidase subunit 3 (cyoC) from Escherichia coli O6:H1 (strain CFT073 / ATCC 700928 / UPEC).